Consider the following 92-residue polypeptide: Small ribosomal subunit protein uS17 (92 aa).

This sequence belongs to the universal ribosomal protein uS17 family. Part of the 30S ribosomal subunit.

Functionally, one of the primary rRNA binding proteins, it binds specifically to the 5'-end of 16S ribosomal RNA. This is Small ribosomal subunit protein uS17 from Mycoplasma mobile (strain ATCC 43663 / 163K / NCTC 11711) (Mesomycoplasma mobile).